An 865-amino-acid polypeptide reads, in one-letter code: Alanine--tRNA ligase (865 aa).

Zn(2+) is bound by residues histidine 554, histidine 558, cysteine 656, and histidine 660.

It belongs to the class-II aminoacyl-tRNA synthetase family. The cofactor is Zn(2+).

It localises to the cytoplasm. The enzyme catalyses tRNA(Ala) + L-alanine + ATP = L-alanyl-tRNA(Ala) + AMP + diphosphate. Catalyzes the attachment of alanine to tRNA(Ala) in a two-step reaction: alanine is first activated by ATP to form Ala-AMP and then transferred to the acceptor end of tRNA(Ala). Also edits incorrectly charged Ser-tRNA(Ala) and Gly-tRNA(Ala) via its editing domain. The sequence is that of Alanine--tRNA ligase from Francisella tularensis subsp. novicida (strain U112).